We begin with the raw amino-acid sequence, 366 residues long: tRNA-specific 2-thiouridylase MnmA (366 aa).

Residues 6–13 (GLSGGVDS) and Met32 contribute to the ATP site. The Nucleophile role is filled by Cys96. A disulfide bridge links Cys96 with Cys196. ATP is bound at residue Gly120. Positions 146–148 (KDQ) are interaction with tRNA. Cys196 functions as the Cysteine persulfide intermediate in the catalytic mechanism. The interval 302-303 (RY) is interaction with tRNA.

The protein belongs to the MnmA/TRMU family.

It localises to the cytoplasm. It catalyses the reaction S-sulfanyl-L-cysteinyl-[protein] + uridine(34) in tRNA + AH2 + ATP = 2-thiouridine(34) in tRNA + L-cysteinyl-[protein] + A + AMP + diphosphate + H(+). In terms of biological role, catalyzes the 2-thiolation of uridine at the wobble position (U34) of tRNA, leading to the formation of s(2)U34. The polypeptide is tRNA-specific 2-thiouridylase MnmA (Treponema denticola (strain ATCC 35405 / DSM 14222 / CIP 103919 / JCM 8153 / KCTC 15104)).